Consider the following 382-residue polypeptide: Lipid-A-disaccharide synthase (382 aa).

Belongs to the LpxB family.

The catalysed reaction is 2-N,3-O-bis[(3R)-3-hydroxytetradecanoyl]-alpha-D-glucosaminyl 1-phosphate + UDP-2-N,3-O-bis[(3R)-3-hydroxytetradecanoyl]-alpha-D-glucosamine = lipid A disaccharide (E. coli) + UDP + H(+). It carries out the reaction a lipid X + a UDP-2-N,3-O-bis[(3R)-3-hydroxyacyl]-alpha-D-glucosamine = a lipid A disaccharide + UDP + H(+). Its pathway is glycolipid biosynthesis; lipid IV(A) biosynthesis; lipid IV(A) from (3R)-3-hydroxytetradecanoyl-[acyl-carrier-protein] and UDP-N-acetyl-alpha-D-glucosamine: step 5/6. Functionally, condensation of UDP-2,3-diacylglucosamine and 2,3-diacylglucosamine-1-phosphate to form lipid A disaccharide, a precursor of lipid A, a phosphorylated glycolipid that anchors the lipopolysaccharide to the outer membrane of the cell. In Escherichia coli O127:H6 (strain E2348/69 / EPEC), this protein is Lipid-A-disaccharide synthase.